A 72-amino-acid chain; its full sequence is MSAIFNFQSLLTVILLLICTCAYIRSLAPSLLDKNKSGLLGIFWKCARIGERKSPYVAVCCVVMAFSILFMQ.

The first 26 residues, 1 to 26, serve as a signal peptide directing secretion; the sequence is MSAIFNFQSLLTVILLLICTCAYIRS. At 27–53 the chain is on the extracellular side; the sequence is LAPSLLDKNKSGLLGIFWKCARIGERK. An N-linked (GlcNAc...) asparagine glycan is attached at N35. Residues 54 to 71 traverse the membrane as a helical segment; the sequence is SPYVAVCCVVMAFSILFM. Position 72 (Q72) is a topological domain, cytoplasmic.

This sequence belongs to the KISH family.

It is found in the golgi apparatus membrane. In terms of biological role, involved in the early part of the secretory pathway. This is Protein kish-A (TMEM167A) from Taeniopygia guttata (Zebra finch).